The following is a 310-amino-acid chain: tRNA-splicing endonuclease subunit Sen34 (310 aa).

The interval G119–P177 is disordered. The span at E128–A144 shows a compositional bias: low complexity. Residues Y247, H255, and K286 contribute to the active site.

Belongs to the tRNA-intron endonuclease family. As to quaternary structure, tRNA splicing endonuclease is a heterotetramer composed of TSEN2, TSEN15, TSEN34/LENG5 and TSEN54. tRNA splicing endonuclease complex also contains proteins of the pre-mRNA 3'-end processing machinery such as CLP1, CPSF1, CPSF4 and CSTF2.

The protein localises to the nucleus. The protein resides in the nucleolus. The enzyme catalyses pretRNA = a 3'-half-tRNA molecule with a 5'-OH end + a 5'-half-tRNA molecule with a 2',3'-cyclic phosphate end + an intron with a 2',3'-cyclic phosphate and a 5'-hydroxyl terminus.. Its function is as follows. Constitutes one of the two catalytic subunit of the tRNA-splicing endonuclease complex, a complex responsible for identification and cleavage of the splice sites in pre-tRNA. It cleaves pre-tRNA at the 5'- and 3'-splice sites to release the intron. The products are an intron and two tRNA half-molecules bearing 2',3'-cyclic phosphate and 5'-OH termini. There are no conserved sequences at the splice sites, but the intron is invariably located at the same site in the gene, placing the splice sites an invariant distance from the constant structural features of the tRNA body. It probably carries the active site for 3'-splice site cleavage. The tRNA splicing endonuclease is also involved in mRNA processing via its association with pre-mRNA 3'-end processing factors, establishing a link between pre-tRNA splicing and pre-mRNA 3'-end formation, suggesting that the endonuclease subunits function in multiple RNA-processing events. In Homo sapiens (Human), this protein is tRNA-splicing endonuclease subunit Sen34 (TSEN34).